Consider the following 48-residue polypeptide: Toxin CSTX-14 (48 aa).

Intrachain disulfides connect cysteine 3-cysteine 18, cysteine 10-cysteine 27, cysteine 17-cysteine 42, and cysteine 29-cysteine 40.

It belongs to the neurotoxin 19 (CSTX) family. 12 subfamily. Heterodimer of A and B chains; disulfide-linked. Contains 4 disulfide bonds. In terms of tissue distribution, expressed by the venom gland.

Its subcellular location is the secreted. The chain is Toxin CSTX-14 from Cupiennius salei (American wandering spider).